Consider the following 509-residue polypeptide: Dihydrolipoyl dehydrogenase, mitochondrial (509 aa).

The transit peptide at 1–35 directs the protein to the mitochondrion; that stretch reads MQSWSRVYCSLAKRGHFNRISHGLQGLSAVPLRTY. Lysine 66 is modified (N6-acetyllysine; alternate). Position 66 is an N6-succinyllysine; alternate (lysine 66). Residues 71-80 and lysine 89 each bind FAD; that span reads EKNETLGGTC. Cysteine 80 and cysteine 85 are joined by a disulfide. 4 positions are modified to N6-acetyllysine; alternate: lysine 104, lysine 122, lysine 132, and lysine 143. An N6-succinyllysine; alternate mark is found at lysine 104, lysine 122, lysine 132, and lysine 143. An FAD-binding site is contributed by glycine 154. An N6-succinyllysine mark is found at lysine 159 and lysine 166. 183 to 185 contributes to the FAD binding site; sequence TGS. Residues 220 to 227 and glutamate 243 contribute to the NAD(+) site; that span reads GAGVIGVE. An N6-succinyllysine mark is found at lysine 273 and lysine 277. An NAD(+)-binding site is contributed by valine 278. Residues serine 285 and serine 297 each carry the phosphoserine modification. Residue glycine 314 participates in NAD(+) binding. Residue lysine 346 is modified to N6-acetyllysine. Residues aspartate 355 and 361–364 each bind FAD; that span reads MLAH. Lysine 410 carries the N6-acetyllysine; alternate modification. An N6-succinyllysine; alternate modification is found at lysine 410. Residues lysine 417 and lysine 420 each carry the N6-acetyllysine modification. Lysine 430 carries the N6-succinyllysine modification. Histidine 487 acts as the Proton acceptor in catalysis. The residue at position 502 (serine 502) is a Phosphoserine. Lysine 505 is subject to N6-acetyllysine; alternate. Lysine 505 is modified (N6-succinyllysine; alternate).

It belongs to the class-I pyridine nucleotide-disulfide oxidoreductase family. As to quaternary structure, homodimer. Part of the multimeric pyruvate dehydrogenase complex that contains multiple copies of pyruvate dehydrogenase (subunits PDHA (PDHA1 or PDHA2) and PDHB, E1), dihydrolipoamide acetyltransferase (DLAT, E2) and lipoamide dehydrogenase (DLD, E3). These subunits are bound to an inner core composed of about 48 DLAT and 12 PDHX molecules (by non covalent bonds). The 2-oxoglutarate dehydrogenase complex is composed of OGDH (2-oxoglutarate dehydrogenase; E1), DLST (dihydrolipoamide succinyltransferase; E2), DLD (dihydrolipoamide dehydrogenase; E3) and the assembly factor KGD4. It contains multiple copies of the three enzymatic components (E1, E2 and E3). In the nucleus, the 2-oxoglutarate dehydrogenase complex associates with KAT2A. Interacts with PDHX. Requires FAD as cofactor. Tyrosine phosphorylated.

The protein resides in the mitochondrion matrix. The protein localises to the nucleus. Its subcellular location is the cell projection. It localises to the cilium. It is found in the flagellum. The protein resides in the cytoplasmic vesicle. The protein localises to the secretory vesicle. Its subcellular location is the acrosome. It carries out the reaction N(6)-[(R)-dihydrolipoyl]-L-lysyl-[protein] + NAD(+) = N(6)-[(R)-lipoyl]-L-lysyl-[protein] + NADH + H(+). In terms of biological role, lipoamide dehydrogenase is a component of the glycine cleavage system as well as an E3 component of three alpha-ketoacid dehydrogenase complexes (pyruvate-, alpha-ketoglutarate-, and branched-chain amino acid-dehydrogenase complex). The 2-oxoglutarate dehydrogenase complex is mainly active in the mitochondrion. A fraction of the 2-oxoglutarate dehydrogenase complex also localizes in the nucleus and is required for lysine succinylation of histones: associates with KAT2A on chromatin and provides succinyl-CoA to histone succinyltransferase KAT2A. In monomeric form may have additional moonlighting function as serine protease. Involved in the hyperactivation of spermatazoa during capacitation and in the spermatazoal acrosome reaction. In Macaca fascicularis (Crab-eating macaque), this protein is Dihydrolipoyl dehydrogenase, mitochondrial (DLD).